The primary structure comprises 277 residues: Knob-associated histidine-rich protein (277 aa).

2 disordered regions span residues 95–114 (DGSH…GYGY) and 162–277 (SSVN…KKKK). Basic and acidic residues-rich tracts occupy residues 169 to 190 (KHGD…EGEK) and 211 to 220 (KDNEDAESVK). The span at 221–237 (SKKHKSHDCEKKKSKKH) shows a compositional bias: basic residues. Basic and acidic residues-rich tracts occupy residues 238-259 (KDNE…GEKH) and 268-277 (KTNEEKKKKK).

The protein localises to the secreted. Functionally, KAHRP might mimick human histidine-rich glycoproteins to anchor host thrombospondin or a parasite analog in a binding complex with the endothelial cell receptor. In Plasmodium falciparum (isolate CDC / Honduras), this protein is Knob-associated histidine-rich protein.